We begin with the raw amino-acid sequence, 449 residues long: Glucose-6-phosphate isomerase (449 aa).

Glu291 serves as the catalytic Proton donor. Active-site residues include His312 and Lys426.

This sequence belongs to the GPI family.

It is found in the cytoplasm. It carries out the reaction alpha-D-glucose 6-phosphate = beta-D-fructose 6-phosphate. It participates in carbohydrate biosynthesis; gluconeogenesis. It functions in the pathway carbohydrate degradation; glycolysis; D-glyceraldehyde 3-phosphate and glycerone phosphate from D-glucose: step 2/4. In terms of biological role, catalyzes the reversible isomerization of glucose-6-phosphate to fructose-6-phosphate. In Clostridium botulinum (strain Alaska E43 / Type E3), this protein is Glucose-6-phosphate isomerase.